A 201-amino-acid polypeptide reads, in one-letter code: Glutathione peroxidase 1 (201 aa).

The residue at position 32 (Ser-32) is a Phosphoserine. Residue Sec-47 is part of the active site. A non-standard amino acid (selenocysteine) is located at residue Sec-47. N6-acetyllysine; alternate occurs at positions 86, 112, and 146. 3 positions are modified to N6-succinyllysine; alternate: Lys-86, Lys-112, and Lys-146. Residues Ser-195 and Ser-199 each carry the phosphoserine modification.

Belongs to the glutathione peroxidase family. In terms of assembly, homotetramer. Interacts with MIEN1. During periods of oxidative stress, Sec-47 may react with a superoxide radical, irreversibly lose hydroselenide and be converted to dehydroalanine.

Its subcellular location is the cytoplasm. It is found in the mitochondrion. It carries out the reaction 2 glutathione + H2O2 = glutathione disulfide + 2 H2O. It catalyses the reaction a hydroperoxy polyunsaturated fatty acid + 2 glutathione = a hydroxy polyunsaturated fatty acid + glutathione disulfide + H2O. The catalysed reaction is tert-butyl hydroperoxide + 2 glutathione = tert-butanol + glutathione disulfide + H2O. The enzyme catalyses cumene hydroperoxide + 2 glutathione = 2-phenylpropan-2-ol + glutathione disulfide + H2O. It carries out the reaction (13S)-hydroperoxy-(9Z,11E)-octadecadienoate + 2 glutathione = (13S)-hydroxy-(9Z,11E)-octadecadienoate + glutathione disulfide + H2O. It catalyses the reaction (9S)-hydroperoxy-(10E,12Z)-octadecadienoate + 2 glutathione = (9S)-hydroxy-(10E,12Z)-octadecadienoate + glutathione disulfide + H2O. The catalysed reaction is (5S)-hydroperoxy-(6E,8Z,11Z,14Z)-eicosatetraenoate + 2 glutathione = (5S)-hydroxy-(6E,8Z,11Z,14Z)-eicosatetraenoate + glutathione disulfide + H2O. The enzyme catalyses (12S)-hydroperoxy-(5Z,8Z,10E,14Z)-eicosatetraenoate + 2 glutathione = (12S)-hydroxy-(5Z,8Z,10E,14Z)-eicosatetraenoate + glutathione disulfide + H2O. It carries out the reaction (12R)-hydroperoxy-(5Z,8Z,10E,14Z)-eicosatetraenoate + 2 glutathione = (12R)-hydroxy-(5Z,8Z,10E,14Z)-eicosatetraenoate + glutathione disulfide + H2O. It catalyses the reaction (15S)-hydroperoxy-(5Z,8Z,11Z,13E)-eicosatetraenoate + 2 glutathione = (15S)-hydroxy-(5Z,8Z,11Z,13E)-eicosatetraenoate + glutathione disulfide + H2O. The catalysed reaction is (5S)-hydroperoxy-(6E,8Z,11Z,14Z,17Z)-eicosapentaenoate + 2 glutathione = (5S)-hydroxy-(6E,8Z,11Z,14Z,17Z)-eicosapentaenoate + glutathione disulfide + H2O. The enzyme catalyses (12S)-hydroperoxy-(5Z,8Z,10E,14Z,17Z)-eicosapentaenoate + 2 glutathione = (12S)-hydroxy-(5Z,8Z,10E,14Z,17Z)-eicosapentaenoate + glutathione disulfide + H2O. It carries out the reaction (15S)-hydroperoxy-(5Z,8Z,11Z,13E,17Z)-eicosapentaenoate + 2 glutathione = (15S)-hydroxy-(5Z,8Z,11Z,13E,17Z)-eicosapentaenoate + glutathione disulfide + H2O. It catalyses the reaction (15S)-hydroperoxy-(11Z,13E)-eicosadienoate + 2 glutathione = (15S)-hydroxy-(11Z,13E)-eicosadienoate + glutathione disulfide + H2O. The catalysed reaction is (17S)-hydroperoxy-(4Z,7Z,10Z,13Z,15E,19Z)-docosahexaenoate + 2 glutathione = (17S)-hydroxy-(4Z,7Z,10Z,13Z,15E,19Z)-docosahexaenoate + glutathione disulfide + H2O. Functionally, catalyzes the reduction of hydroperoxides in a glutathione-dependent manner thus regulating cellular redox homeostasis. Can reduce small soluble hydroperoxides such as H2O2, cumene hydroperoxide and tert-butyl hydroperoxide, as well as several fatty acid-derived hydroperoxides. In platelets catalyzes the reduction of 12-hydroperoxyeicosatetraenoic acid, the primary product of the arachidonate 12-lipoxygenase pathway. In Callithrix jacchus (White-tufted-ear marmoset), this protein is Glutathione peroxidase 1 (GPX1).